The chain runs to 938 residues: Isoleucine--tRNA ligase (938 aa).

The 'HIGH' region signature appears at 58-68 (PYANGSIHIGH). Lys183 bears the N6-acetyllysine mark. Glu561 is a binding site for L-isoleucyl-5'-AMP. A 'KMSKS' region motif is present at residues 602–606 (KMSKS). ATP is bound at residue Lys605. Cys901, Cys904, Cys921, and Cys924 together coordinate Zn(2+).

Belongs to the class-I aminoacyl-tRNA synthetase family. IleS type 1 subfamily. Monomer. Requires Zn(2+) as cofactor.

Its subcellular location is the cytoplasm. The enzyme catalyses tRNA(Ile) + L-isoleucine + ATP = L-isoleucyl-tRNA(Ile) + AMP + diphosphate. Catalyzes the attachment of isoleucine to tRNA(Ile). As IleRS can inadvertently accommodate and process structurally similar amino acids such as valine, to avoid such errors it has two additional distinct tRNA(Ile)-dependent editing activities. One activity is designated as 'pretransfer' editing and involves the hydrolysis of activated Val-AMP. The other activity is designated 'posttransfer' editing and involves deacylation of mischarged Val-tRNA(Ile). This chain is Isoleucine--tRNA ligase, found in Escherichia coli O6:H1 (strain CFT073 / ATCC 700928 / UPEC).